The sequence spans 452 residues: Phosphoglucosamine mutase (452 aa).

The active-site Phosphoserine intermediate is S98. S98, D239, D241, and D243 together coordinate Mg(2+). At S98 the chain carries Phosphoserine.

Belongs to the phosphohexose mutase family. It depends on Mg(2+) as a cofactor. Post-translationally, activated by phosphorylation.

It catalyses the reaction alpha-D-glucosamine 1-phosphate = D-glucosamine 6-phosphate. Catalyzes the conversion of glucosamine-6-phosphate to glucosamine-1-phosphate. This Anaplasma marginale (strain St. Maries) protein is Phosphoglucosamine mutase.